Consider the following 259-residue polypeptide: Pyrroloquinoline-quinone synthase (259 aa).

The protein belongs to the PqqC family.

It catalyses the reaction 6-(2-amino-2-carboxyethyl)-7,8-dioxo-1,2,3,4,7,8-hexahydroquinoline-2,4-dicarboxylate + 3 O2 = pyrroloquinoline quinone + 2 H2O2 + 2 H2O + H(+). It functions in the pathway cofactor biosynthesis; pyrroloquinoline quinone biosynthesis. Functionally, ring cyclization and eight-electron oxidation of 3a-(2-amino-2-carboxyethyl)-4,5-dioxo-4,5,6,7,8,9-hexahydroquinoline-7,9-dicarboxylic-acid to PQQ. This Bradyrhizobium diazoefficiens (strain JCM 10833 / BCRC 13528 / IAM 13628 / NBRC 14792 / USDA 110) protein is Pyrroloquinoline-quinone synthase.